The following is a 689-amino-acid chain: Glycine--tRNA ligase beta subunit (689 aa).

Belongs to the class-II aminoacyl-tRNA synthetase family. As to quaternary structure, tetramer of two alpha and two beta subunits.

It localises to the cytoplasm. The enzyme catalyses tRNA(Gly) + glycine + ATP = glycyl-tRNA(Gly) + AMP + diphosphate. In Yersinia pseudotuberculosis serotype O:1b (strain IP 31758), this protein is Glycine--tRNA ligase beta subunit.